Reading from the N-terminus, the 251-residue chain is MAGHSKFKNIMHRKGRADAARSKLFSKLSREITVAAKSGVPDPNMNPRLRLAVNNAKAESLPKDVIDRAIKKSQMGDAADYSEIRYEGVAAGGVGIIVEVLTDNKNRAAANVRSYFTKMGGNMGATNSVAFNYDRVGQVSYPAKAASEDDMMEAAIEAGADDVVSDMDEEGEGHIVYTAFESLNEVAAALEAKFGPASNTKIAWRPKMQVPVTGDAVATLMKLLDALNDDDDVQAVYSNEEISDEDVAKLG.

Belongs to the TACO1 family.

Its subcellular location is the cytoplasm. This Caulobacter sp. (strain K31) protein is Probable transcriptional regulatory protein Caul_0780.